The sequence spans 225 residues: 7-cyano-7-deazaguanine synthase (225 aa).

10-20 is a binding site for ATP; sequence VSGGLDSTTAL. The Zn(2+) site is built by C189, C199, C202, and C205.

The protein belongs to the QueC family. It depends on Zn(2+) as a cofactor.

It carries out the reaction 7-carboxy-7-deazaguanine + NH4(+) + ATP = 7-cyano-7-deazaguanine + ADP + phosphate + H2O + H(+). It functions in the pathway purine metabolism; 7-cyano-7-deazaguanine biosynthesis. In terms of biological role, catalyzes the ATP-dependent conversion of 7-carboxy-7-deazaguanine (CDG) to 7-cyano-7-deazaguanine (preQ(0)). This Saccharophagus degradans (strain 2-40 / ATCC 43961 / DSM 17024) protein is 7-cyano-7-deazaguanine synthase.